A 312-amino-acid chain; its full sequence is uncharacterized protein (312 aa).

Transmembrane regions (helical) follow at residues 4–24 and 286–306; these read AIYLLILCIFGLFSVYFTYAE and YLLSFIGIIIGFGIIGLAIYL.

It localises to the cell membrane. This is an uncharacterized protein from Methanocaldococcus jannaschii (strain ATCC 43067 / DSM 2661 / JAL-1 / JCM 10045 / NBRC 100440) (Methanococcus jannaschii).